Consider the following 132-residue polypeptide: UPF0357 protein YCL012C (132 aa).

A signal peptide spans 1–25; that stretch reads MWDLFYFKVFFWVVLISLCIFMVHR.

Belongs to the UPF0357 family.

This is UPF0357 protein YCL012C (YCL012C) from Saccharomyces bayanus (Yeast).